The sequence spans 489 residues: Rhamnulokinase (489 aa).

13-17 (ASSGR) contributes to the ATP binding site. C68 and C222 are oxidised to a cystine. Substrate is bound by residues G83 and 236–238 (HDT). Residue D237 is the Proton acceptor of the active site. T259 lines the ATP pocket. A substrate-binding site is contributed by N296. Q304 contacts ATP. A disulfide bond links C353 and C370. G402 is an ATP binding site. C413 and C417 form a disulfide bridge.

The protein belongs to the rhamnulokinase family. As to quaternary structure, monomer. The cofactor is Mg(2+).

The enzyme catalyses L-rhamnulose + ATP = L-rhamnulose 1-phosphate + ADP + H(+). Its pathway is carbohydrate degradation; L-rhamnose degradation; glycerone phosphate from L-rhamnose: step 2/3. Functionally, involved in the catabolism of L-rhamnose (6-deoxy-L-mannose). Catalyzes the transfer of the gamma-phosphate group from ATP to the 1-hydroxyl group of L-rhamnulose to yield L-rhamnulose 1-phosphate. The protein is Rhamnulokinase of Escherichia fergusonii (strain ATCC 35469 / DSM 13698 / CCUG 18766 / IAM 14443 / JCM 21226 / LMG 7866 / NBRC 102419 / NCTC 12128 / CDC 0568-73).